Here is a 72-residue protein sequence, read N- to C-terminus: Translation initiation factor IF-1 (72 aa).

In terms of domain architecture, S1-like spans 1-72 (MAKEDNIEMQ…TKGRIVFRAR (72 aa)).

This sequence belongs to the IF-1 family. In terms of assembly, component of the 30S ribosomal translation pre-initiation complex which assembles on the 30S ribosome in the order IF-2 and IF-3, IF-1 and N-formylmethionyl-tRNA(fMet); mRNA recruitment can occur at any time during PIC assembly.

It is found in the cytoplasm. Its function is as follows. One of the essential components for the initiation of protein synthesis. Stabilizes the binding of IF-2 and IF-3 on the 30S subunit to which N-formylmethionyl-tRNA(fMet) subsequently binds. Helps modulate mRNA selection, yielding the 30S pre-initiation complex (PIC). Upon addition of the 50S ribosomal subunit IF-1, IF-2 and IF-3 are released leaving the mature 70S translation initiation complex. The protein is Translation initiation factor IF-1 of Shewanella baltica (strain OS155 / ATCC BAA-1091).